A 620-amino-acid polypeptide reads, in one-letter code: Long-chain fatty acid transport protein 2 (620 aa).

Over methionine 1–alanine 4 the chain is Lumenal. The helical transmembrane segment at isoleucine 5–phenylalanine 27 threads the bilayer. The Cytoplasmic portion of the chain corresponds to glutamine 28–cysteine 106. The helical transmembrane segment at valine 107–leucine 127 threads the bilayer. The Lumenal segment spans residues glycine 128–tyrosine 261. Tyrosine 222–lysine 233 contacts AMP. Residues isoleucine 262 to alanine 282 traverse the membrane as a helical segment. At glycine 283–leucine 620 the chain is on the cytoplasmic side. Lysine 291 is modified (N6-acetyllysine). Threonine 577 bears the Phosphothreonine mark.

It belongs to the ATP-dependent AMP-binding enzyme family. Expressed in liver, kidney, placenta, intestine, brain, heart, and colon. Predominantly expressed in liver. As to expression, expressed in liver, placenta, and intestine, but much lower relative to isoform 1.

The protein localises to the endoplasmic reticulum membrane. Its subcellular location is the peroxisome membrane. It localises to the cell membrane. The protein resides in the microsome. The enzyme catalyses a fatty acid(in) = a fatty acid(out). The catalysed reaction is (9Z)-octadecenoate(out) = (9Z)-octadecenoate(in). It carries out the reaction a long-chain fatty acid + ATP + CoA = a long-chain fatty acyl-CoA + AMP + diphosphate. It catalyses the reaction (5Z,8Z,11Z,14Z)-eicosatetraenoate + ATP + CoA = (5Z,8Z,11Z,14Z)-eicosatetraenoyl-CoA + AMP + diphosphate. The enzyme catalyses hexadecanoate + ATP + CoA = hexadecanoyl-CoA + AMP + diphosphate. The catalysed reaction is (9Z)-octadecenoate + ATP + CoA = (9Z)-octadecenoyl-CoA + AMP + diphosphate. It carries out the reaction 3,7,11,15-tetramethylhexadecanoate + ATP + CoA = phytanoyl-CoA + AMP + diphosphate. It catalyses the reaction (9Z,12Z,15Z)-octadecatrienoate + ATP + CoA = (9Z,12Z,15Z)-octadecatrienoyl-CoA + AMP + diphosphate. The enzyme catalyses 2,6,10,14-tetramethylpentadecanoate + ATP + CoA = pristanoyl-CoA + AMP + diphosphate. The catalysed reaction is (E)-hexadec-2-enoate + ATP + CoA = (2E)-hexadecenoyl-CoA + AMP + diphosphate. It carries out the reaction a very long-chain fatty acid + ATP + CoA = a very long-chain fatty acyl-CoA + AMP + diphosphate. It catalyses the reaction tetracosanoate + ATP + CoA = tetracosanoyl-CoA + AMP + diphosphate. The enzyme catalyses (4Z,7Z,10Z,13Z,16Z,19Z)-docosahexaenoate + ATP + CoA = (4Z,7Z,10Z,13Z,16Z,19Z)-docosahexaenoyl-CoA + AMP + diphosphate. The catalysed reaction is (25R)-3alpha,7alpha,12alpha-trihydroxy-5beta-cholestan-26-oate + ATP + CoA = (25R)-3alpha,7alpha,12alpha-trihydroxy-5beta-cholestan-26-oyl-CoA + AMP + diphosphate. Its function is as follows. Mediates the import of long-chain fatty acids (LCFA) into the cell by facilitating their transport across cell membranes, playing an important role in hepatic fatty acid uptake. Also functions as an acyl-CoA ligase catalyzing the ATP-dependent formation of fatty acyl-CoA using LCFA and very-long-chain fatty acids (VLCFA) as substrates, which prevents fatty acid efflux from cells and might drive more fatty acid uptake. Plays a pivotal role in regulating available LCFA substrates from exogenous sources in tissues undergoing high levels of beta-oxidation or triglyceride synthesis. Can also activate branched-chain fatty acids such as phytanic acid and pristanic acid. May contribute to the synthesis of sphingosine-1-phosphate. Does not activate C24 bile acids, cholate and chenodeoxycholate. In vitro, activates 3-alpha,7-alpha,12-alpha-trihydroxy-5-beta-cholestanate (THCA), the C27 precursor of cholic acid deriving from the de novo synthesis from cholesterol. However, it is not critical for THCA activation and bile synthesis in vivo. Exhibits both long-chain fatty acids (LCFA) transport activity and acyl CoA synthetase towards very long-chain fatty acids. Shows a preference for generating CoA derivatives of n-3 fatty acids, which are preferentially trafficked into phosphatidylinositol. In terms of biological role, exhibits long-chain fatty acids (LCFA) transport activity but lacks acyl CoA synthetase towards very long-chain fatty acids. This Homo sapiens (Human) protein is Long-chain fatty acid transport protein 2 (SLC27A2).